We begin with the raw amino-acid sequence, 53 residues long: Sodium/potassium-transporting ATPase subunit gamma (53 aa).

Residues 16–34 traverse the membrane as a helical segment; it reads GGLIFAALAFIVGLVIILS.

It belongs to the FXYD family. As to quaternary structure, regulatory subunit of the sodium/potassium-transporting ATPase which is composed of a catalytic alpha subunit, an auxiliary non-catalytic beta subunit and an additional regulatory subunit. Post-translationally, the N-terminus is blocked. In terms of tissue distribution, highest levels expressed in the kidney and spleen. Restricted to the basolateral membrane in renal epithelial cells and varies in its level of expression along the nephron.

The protein resides in the membrane. May be involved in forming the receptor site for cardiac glycoside binding or may modulate the transport function of the sodium ATPase. The protein is Sodium/potassium-transporting ATPase subunit gamma (FXYD2) of Ovis aries (Sheep).